Here is a 63-residue protein sequence, read N- to C-terminus: Large ribosomal subunit protein bL32 (63 aa).

A disordered region spans residues 1 to 20 (MANPKAKMSKSRRDKRRAQF). Over residues 7-18 (KMSKSRRDKRRA) the composition is skewed to basic residues.

This sequence belongs to the bacterial ribosomal protein bL32 family.

The protein is Large ribosomal subunit protein bL32 of Chlorobaculum parvum (strain DSM 263 / NCIMB 8327) (Chlorobium vibrioforme subsp. thiosulfatophilum).